The chain runs to 349 residues: Fructose-1,6-bisphosphatase class 1 (349 aa).

Mg(2+) contacts are provided by glutamate 91, aspartate 110, leucine 112, and aspartate 113. Substrate contacts are provided by residues 113–116 (DGSS) and asparagine 205. Glutamate 277 contributes to the Mg(2+) binding site.

The protein belongs to the FBPase class 1 family. As to quaternary structure, homotetramer. The cofactor is Mg(2+).

The protein resides in the cytoplasm. The enzyme catalyses beta-D-fructose 1,6-bisphosphate + H2O = beta-D-fructose 6-phosphate + phosphate. It functions in the pathway carbohydrate biosynthesis; gluconeogenesis. This is Fructose-1,6-bisphosphatase class 1 from Rhizobium meliloti (strain 1021) (Ensifer meliloti).